The primary structure comprises 139 residues: Arsenate reductase (139 aa).

Catalysis depends on nucleophile residues Cys10, Cys82, and Cys89. 2 disulfides stabilise this stretch: Cys10–Cys82 and Cys82–Cys89.

Belongs to the low molecular weight phosphotyrosine protein phosphatase family. Thioredoxin-coupled ArsC subfamily.

It localises to the cytoplasm. The catalysed reaction is arsenate + [thioredoxin]-dithiol + H(+) = arsenite + [thioredoxin]-disulfide + H2O. Functionally, catalyzes the reduction of arsenate [As(V)] to arsenite [As(III)]. This is Arsenate reductase from Oceanobacillus iheyensis (strain DSM 14371 / CIP 107618 / JCM 11309 / KCTC 3954 / HTE831).